The sequence spans 926 residues: Ubiquitin carboxyl-terminal hydrolase 4 (926 aa).

The 124-residue stretch at 205–328 folds into the Rhodanese domain; the sequence is SQMEILLIDI…WLKSNYGSQV (124 aa). Ser-443 bears the Phosphoserine mark. One can recognise a USP domain in the interval 562–923; that stretch reads VGLENLGNSC…NAYVLFYHRV (362 aa). Cys-571 acts as the Nucleophile in catalysis. The active-site Proton acceptor is His-880.

Belongs to the peptidase C19 family. Interacts with BRO1, RFU1 and VPS32. Associates with the 26S proteasome.

The protein localises to the cytoplasm. It is found in the late endosome membrane. The enzyme catalyses Thiol-dependent hydrolysis of ester, thioester, amide, peptide and isopeptide bonds formed by the C-terminal Gly of ubiquitin (a 76-residue protein attached to proteins as an intracellular targeting signal).. RFU1 is an inhibitor of deubiquitination activity. In terms of biological role, ubiquitin thioesterase that acts at the late endosome/prevacuolar compartment to recover ubiquitin from ubiquitinated membrane proteins en route to the vacuole. Also removes ubiquitin from soluble proteins targeted to proteasomes. Is essential to maintain a normal level of free ubiquitin. Involved in the ammonium-induced down-regulation of the GAP1 permease and the UME3 destruction in response to oxidative stress. Has a role in the RAD9 checkpoint response to TOP1 poisons. Required for promoting coordination of DNA replication and avoids DNA overreplication. In Saccharomyces cerevisiae (strain YJM789) (Baker's yeast), this protein is Ubiquitin carboxyl-terminal hydrolase 4 (DOA4).